We begin with the raw amino-acid sequence, 103 residues long: Pyrimidine/purine nucleoside phosphorylase (103 aa).

Belongs to the nucleoside phosphorylase PpnP family.

The enzyme catalyses a purine D-ribonucleoside + phosphate = a purine nucleobase + alpha-D-ribose 1-phosphate. The catalysed reaction is adenosine + phosphate = alpha-D-ribose 1-phosphate + adenine. It carries out the reaction cytidine + phosphate = cytosine + alpha-D-ribose 1-phosphate. It catalyses the reaction guanosine + phosphate = alpha-D-ribose 1-phosphate + guanine. The enzyme catalyses inosine + phosphate = alpha-D-ribose 1-phosphate + hypoxanthine. The catalysed reaction is thymidine + phosphate = 2-deoxy-alpha-D-ribose 1-phosphate + thymine. It carries out the reaction uridine + phosphate = alpha-D-ribose 1-phosphate + uracil. It catalyses the reaction xanthosine + phosphate = alpha-D-ribose 1-phosphate + xanthine. In terms of biological role, catalyzes the phosphorolysis of diverse nucleosides, yielding D-ribose 1-phosphate and the respective free bases. Can use uridine, adenosine, guanosine, cytidine, thymidine, inosine and xanthosine as substrates. Also catalyzes the reverse reactions. The sequence is that of Pyrimidine/purine nucleoside phosphorylase from Nocardia farcinica (strain IFM 10152).